The primary structure comprises 1334 residues: Aldehyde oxidase 1 (1334 aa).

One can recognise a 2Fe-2S ferredoxin-type domain in the interval 5 to 92 (PELLFYVNGR…GAAVTTVEGI (88 aa)). [2Fe-2S] cluster-binding residues include Cys44, Cys49, Cys52, and Cys74. Gln113 lines the Mo-molybdopterin pocket. [2Fe-2S] cluster is bound by residues Cys114, Cys117, Cys149, and Cys151. Cys151 contacts Mo-molybdopterin. One can recognise an FAD-binding PCMH-type domain in the interval 236-421 (FSGERMMWIS…ASVHIPYSRK (186 aa)). Residues 264-271 (VVMGNTSV), Ala345, Ser354, His358, Asp367, and Leu411 contribute to the FAD site. Mo-molybdopterin-binding positions include 802 to 803 (AF) and Met1043. Residue Ser1064 is modified to Phosphoserine. Mo-molybdopterin is bound by residues 1084 to 1087 (GSVV), Gln1199, and Leu1264. Residue Glu1266 is the Proton acceptor; for azaheterocycle hydroxylase activity of the active site.

It belongs to the xanthine dehydrogenase family. Homodimer. Requires [2Fe-2S] cluster as cofactor. FAD serves as cofactor. The cofactor is Mo-molybdopterin. Post-translationally, the N-terminus is blocked. As to expression, very high expression in liver and lung. High expression in kidney, pancreas, brain stem and spinal cord. Moderate expression in heart, testis, eye, cerebral cortex and cerebellum. Low expression in stomach and muscle.

The protein resides in the cytoplasm. The enzyme catalyses an aldehyde + O2 + H2O = a carboxylate + H2O2 + H(+). It catalyses the reaction retinal + O2 + H2O = retinoate + H2O2 + H(+). It carries out the reaction all-trans-retinal + O2 + H2O = all-trans-retinoate + H2O2 + H(+). Inhibited by hydralazine and menadione. Not inhibited by BOF-4272 or allopurinol, xanthine dehydrogenase potent inhibitors. In contrast to guinea pig, human and rat, isovanillin is not an inhibitor but a substrate for AOX1 in rabbit. In terms of biological role, oxidase with broad substrate specificity, oxidizing aromatic azaheterocycles, such as N1-methylnicotinamide, N-methylphthalazinium and phthalazine, as well as aldehydes, such as benzaldehyde, retinal, pyridoxal, and vanillin. Plays a key role in the metabolism of xenobiotics and drugs containing aromatic azaheterocyclic substituents. Participates in the bioactivation of prodrugs such as famciclovir, catalyzing the oxidation step from 6-deoxypenciclovir to penciclovir, which is a potent antiviral agent. Is probably involved in the regulation of reactive oxygen species homeostasis. May be a prominent source of superoxide generation via the one-electron reduction of molecular oxygen. May also catalyze nitric oxide (NO) production via the reduction of nitrite to NO with NADH or aldehyde as electron donor. May play a role in adipogenesis. Cannot use hypoxanthine and all-trans-retinol as substrate. In Oryctolagus cuniculus (Rabbit), this protein is Aldehyde oxidase 1.